The chain runs to 240 residues: Biosynthetic peptidoglycan transglycosylase (240 aa).

Residues 12 to 31 (ALLWFAGGSVLLVLVFRFVP) form a helical membrane-spanning segment.

Belongs to the glycosyltransferase 51 family.

It localises to the cell inner membrane. It carries out the reaction [GlcNAc-(1-&gt;4)-Mur2Ac(oyl-L-Ala-gamma-D-Glu-L-Lys-D-Ala-D-Ala)](n)-di-trans,octa-cis-undecaprenyl diphosphate + beta-D-GlcNAc-(1-&gt;4)-Mur2Ac(oyl-L-Ala-gamma-D-Glu-L-Lys-D-Ala-D-Ala)-di-trans,octa-cis-undecaprenyl diphosphate = [GlcNAc-(1-&gt;4)-Mur2Ac(oyl-L-Ala-gamma-D-Glu-L-Lys-D-Ala-D-Ala)](n+1)-di-trans,octa-cis-undecaprenyl diphosphate + di-trans,octa-cis-undecaprenyl diphosphate + H(+). Its pathway is cell wall biogenesis; peptidoglycan biosynthesis. In terms of biological role, peptidoglycan polymerase that catalyzes glycan chain elongation from lipid-linked precursors. The chain is Biosynthetic peptidoglycan transglycosylase from Pseudomonas fluorescens (strain Pf0-1).